A 187-amino-acid polypeptide reads, in one-letter code: ATP synthase subunit b 2 (187 aa).

A helical transmembrane segment spans residues 32–52 (TTFAAQILWLAIAFGLLYYLM).

This sequence belongs to the ATPase B chain family. As to quaternary structure, F-type ATPases have 2 components, F(1) - the catalytic core - and F(0) - the membrane proton channel. F(1) has five subunits: alpha(3), beta(3), gamma(1), delta(1), epsilon(1). F(0) has three main subunits: a(1), b(2) and c(10-14). The alpha and beta chains form an alternating ring which encloses part of the gamma chain. F(1) is attached to F(0) by a central stalk formed by the gamma and epsilon chains, while a peripheral stalk is formed by the delta and b chains.

The protein resides in the cell inner membrane. Its function is as follows. F(1)F(0) ATP synthase produces ATP from ADP in the presence of a proton or sodium gradient. F-type ATPases consist of two structural domains, F(1) containing the extramembraneous catalytic core and F(0) containing the membrane proton channel, linked together by a central stalk and a peripheral stalk. During catalysis, ATP synthesis in the catalytic domain of F(1) is coupled via a rotary mechanism of the central stalk subunits to proton translocation. In terms of biological role, component of the F(0) channel, it forms part of the peripheral stalk, linking F(1) to F(0). The b'-subunit is a diverged and duplicated form of b found in plants and photosynthetic bacteria. The sequence is that of ATP synthase subunit b 2 (atpF2) from Methylobacterium sp. (strain 4-46).